We begin with the raw amino-acid sequence, 239 residues long: Ribosomal RNA large subunit methyltransferase E (239 aa).

Positions 81, 83, 104, 120, and 144 each coordinate S-adenosyl-L-methionine. Catalysis depends on lysine 184, which acts as the Proton acceptor.

It belongs to the class I-like SAM-binding methyltransferase superfamily. RNA methyltransferase RlmE family.

It localises to the cytoplasm. The enzyme catalyses uridine(2552) in 23S rRNA + S-adenosyl-L-methionine = 2'-O-methyluridine(2552) in 23S rRNA + S-adenosyl-L-homocysteine + H(+). Specifically methylates the uridine in position 2552 of 23S rRNA at the 2'-O position of the ribose in the fully assembled 50S ribosomal subunit. The sequence is that of Ribosomal RNA large subunit methyltransferase E from Rhizobium rhizogenes (strain K84 / ATCC BAA-868) (Agrobacterium radiobacter).